A 534-amino-acid polypeptide reads, in one-letter code: MAVVYYLLLAGLIACSHALAAGTPALGDDRGRPWPASLAALALDGKLRTDSNATAAASTDFGNITSALPAAVLYPSSTGDLVALLSAANSTPGWPYTIAFRGRGHSLMGQAFAPGGVVVNMASLGDAAAPPRINVSADGRYVDAGGEQVWIDVLRASLARGVAPRSWNDYLYLTVGGTLSNAGISGQAFRHGPQISNVLEMDVITGHGEMVTCSKQLNADLFDAVLGGLGQFGVITRARIAVEPAPARARWVRFVYTDFAAFSADQERLTAPRPGGGGASFGPMSYVEGSVFVNQSLATDLANTGFFTDADVARIVALAGERNATTVYSIEATLNYDNATAAAAAVDQELASVLGTLSYVEGFAFQRDVAYAAFLDRVHGEEVALNKLGLWRVPHPWLNMFVPRSRIADFDRGVFKGILQGTDIVGPLIVYPLNKSMWDDGMSAATPSEDVFYAVSLLFSSVAPNDLARLQEQNRRILRFCDLAGIQYKTYLARHTDRSDWVRHFGAAKWNRFVEMKNKYDPKRLLSPGQDIFN.

A signal peptide spans 1 to 18 (MAVVYYLLLAGLIACSHA). Asn52, Asn63, and Asn89 each carry an N-linked (GlcNAc...) asparagine glycan. The FAD-binding PCMH-type domain maps to 65–245 (TSALPAAVLY…TRARIAVEPA (181 aa)). Phe100, Gly102, Arg103, and Gly104 together coordinate FAD. His105 bears the Pros-8alpha-FAD histidine mark. The FAD site is built by Ser106 and Gln110. N-linked (GlcNAc...) asparagine glycosylation is present at Asn134. The FAD site is built by Asp169, Thr174, Ser180, Ile184, and Ile235. Asp169 is a N(6)-dimethylallyladenine binding site. Residue Asp169 coordinates trans-zeatin. 3 N-linked (GlcNAc...) asparagine glycosylation sites follow: Asn294, Asn323, and Asn338. Glu381 contacts N(6)-dimethylallyladenine. Glu381 serves as a coordination point for trans-zeatin. Asn434 carries an N-linked (GlcNAc...) asparagine glycan. Trans-zeatin is bound at residue Ser456. Positions 491, 527, and 530 each coordinate FAD.

This sequence belongs to the oxygen-dependent FAD-linked oxidoreductase family. In terms of assembly, monomer. It depends on FAD as a cofactor. Post-translationally, glycosylated; with approximately 10 hexose residues per site. As to expression, expressed in immature kernels and unpollinated cobs. Weakly expressed in kernels harvested two weeks after anthesis.

The protein localises to the secreted. It is found in the extracellular space. It carries out the reaction N(6)-dimethylallyladenine + A + H2O = 3-methyl-2-butenal + adenine + AH2. With respect to regulation, competitive inhibition by phenylureas. In terms of biological role, catalyzes the oxidation of cytokinins, a family of N(6)-substituted adenine derivatives that are plant hormones, where the substituent is an isopentenyl group. Cleaves trans-zeatin, N(6)-dimethylallyladenine (isopentenyladenine), isopentenyladenosine, zeatin riboside and cis-zeatin, but not dihydrozeatin, kinetin and benzylaminopurine. This chain is Cytokinin dehydrogenase 1 (CKX1), found in Zea mays (Maize).